Consider the following 307-residue polypeptide: Protoheme IX farnesyltransferase (307 aa).

A run of 8 helical transmembrane segments spans residues 32 to 52 (MGIVNSNTLTVFTGFWLALHF), 65 to 85 (FFTIVGSGLVMAGVCCLNNYI), 108 to 128 (PGFALTFGLVILLLGFVFLLL), 131 to 151 (PMAVLMGFIGAFTYVVLYSLW), 158 to 178 (LNTVVGSISGAVPPLIGWAAI), 186 to 206 (IAWMLFLIMFIWQIPHFLALA), 251 to 271 (LGITFMVIATLLNIGWIVLGF), and 287 to 307 (FVYSLNYLTILFVSMIVVTFF).

The protein belongs to the UbiA prenyltransferase family. Protoheme IX farnesyltransferase subfamily. Interacts with CtaA.

It localises to the cell membrane. It carries out the reaction heme b + (2E,6E)-farnesyl diphosphate + H2O = Fe(II)-heme o + diphosphate. Its pathway is porphyrin-containing compound metabolism; heme O biosynthesis; heme O from protoheme: step 1/1. Its function is as follows. Converts heme B (protoheme IX) to heme O by substitution of the vinyl group on carbon 2 of heme B porphyrin ring with a hydroxyethyl farnesyl side group. In Bacillus anthracis (strain A0248), this protein is Protoheme IX farnesyltransferase.